The primary structure comprises 433 residues: Glutamate-1-semialdehyde 2,1-aminomutase (433 aa).

Position 273 is an N6-(pyridoxal phosphate)lysine (Lys-273).

This sequence belongs to the class-III pyridoxal-phosphate-dependent aminotransferase family. HemL subfamily. Homodimer. Pyridoxal 5'-phosphate serves as cofactor.

The protein localises to the cytoplasm. It catalyses the reaction (S)-4-amino-5-oxopentanoate = 5-aminolevulinate. It functions in the pathway porphyrin-containing compound metabolism; protoporphyrin-IX biosynthesis; 5-aminolevulinate from L-glutamyl-tRNA(Glu): step 2/2. It participates in porphyrin-containing compound metabolism; chlorophyll biosynthesis. This chain is Glutamate-1-semialdehyde 2,1-aminomutase, found in Microcystis aeruginosa (strain NIES-843 / IAM M-2473).